We begin with the raw amino-acid sequence, 362 residues long: Lactosylceramide alpha-2,3-sialyltransferase (362 aa).

The Cytoplasmic segment spans residues 1 to 5 (MRRPS). Residues 6-26 (LLLKDILKCTLLVFGVWILYI) form a helical; Signal-anchor for type II membrane protein membrane-spanning segment. The Lumenal portion of the chain corresponds to 27 to 362 (LKLNYTTEEC…DLSGGIDREF (336 aa)). N-linked (GlcNAc...) asparagine glycosylation is found at asparagine 30, asparagine 180, asparagine 224, and asparagine 334. Cysteine 139 and cysteine 297 are joined by a disulfide.

The protein belongs to the glycosyltransferase 29 family.

It is found in the golgi apparatus membrane. It catalyses the reaction a beta-D-Gal-(1-&gt;4)-beta-D-Glc-(1&lt;-&gt;1)-Cer(d18:1(4E)) + CMP-N-acetyl-beta-neuraminate = a ganglioside GM3 (d18:1(4E)) + CMP + H(+). The catalysed reaction is ganglioside GA2 (d18:1(4E)/18:0) + CMP-N-acetyl-beta-neuraminate = ganglioside GM2 (d18:1(4E)/18:0) + CMP + H(+). The enzyme catalyses a beta-D-Gal-(1&lt;-&gt;1')-ceramide + CMP-N-acetyl-beta-neuraminate = N-acetyl-alpha-neuraminosyl-(2-&gt;3)-beta-D-galactosyl-(1&lt;-&gt;1')-ceramide + CMP + H(+). It carries out the reaction ganglioside GA1 (d18:1(4E)/18:0) + CMP-N-acetyl-beta-neuraminate = ganglioside GM1 (d18:1(4E)/18:0) + CMP + H(+). In terms of biological role, transfers the sialyl group (N-acetyl-alpha-neuraminyl or NeuAc) from CMP-NeuAc to the non-reducing terminal galactose (Gal) of glycosphingolipids forming gangliosides (important molecules involved in the regulation of multiple cellular processes, including cell proliferation and differentiation, apoptosis, embryogenesis, development, and oncogenesis). Mainly involved in the biosynthesis of ganglioside GM3 but can also use different glycolipids as substrate acceptors such as D-galactosylceramide (GalCer), asialo-GM2 (GA2) and asialo-GM1 (GA1), although less preferentially than beta-D-Gal-(1-&gt;4)-beta-D-Glc-(1&lt;-&gt;1)-Cer (LacCer). The protein is Lactosylceramide alpha-2,3-sialyltransferase (ST3GAL5) of Pan troglodytes (Chimpanzee).